The chain runs to 142 residues: MENMAEDLRQKAMALEIYNQQLQMIQSEITSIRALKSEIMNSIKTIENIKADEETLIPVGPGVFLKAKIVDDKALIGVKSDIYVEKSFNEVIEDLKKSVEDLDKAEKEGMKKAEELAKAITALRKELQTEIQKAQQAQDKKQ.

This sequence belongs to the prefoldin subunit alpha family. In terms of assembly, heterohexamer of two alpha and four beta subunits.

It localises to the cytoplasm. Its function is as follows. Molecular chaperone capable of stabilizing a range of proteins. Seems to fulfill an ATP-independent, HSP70-like function in archaeal de novo protein folding. The protein is Prefoldin subunit alpha 1 (pfdA1) of Methanocaldococcus jannaschii (strain ATCC 43067 / DSM 2661 / JAL-1 / JCM 10045 / NBRC 100440) (Methanococcus jannaschii).